The primary structure comprises 717 residues: Segment polarity protein dishevelled homolog DVL-3 (717 aa).

A DIX domain is found at 1–82; that stretch reads MGETKVIYHL…RVVCWLVSAD (82 aa). The disordered stretch occupies residues 89–235; sequence GSVCADIQSD…PQIERSSSFS (147 aa). Over residues 118-127 the composition is skewed to polar residues; that stretch reads HPNTRGSQEN. Basic and acidic residues predominate over residues 140–155; sequence ARRERPGRKETSEHAT. Over residues 173–189 the composition is skewed to low complexity; it reads ESSSTLMSSELDSTSFF. Positions 199–210 are enriched in polar residues; the sequence is RFSNSTEQSSAS. The span at 212–224 shows a compositional bias: basic residues; it reads LMRRHKRRRRKPK. The PDZ domain occupies 248 to 333; sequence TVTLNMEKYN…KPGPITLTVA (86 aa). The region spanning 421 to 495 is the DEP domain; it reads SESGLEVRDR…SEQCYYIFGD (75 aa). The interval 552-653 is disordered; the sequence is PDPAYIYGGG…THQSFGPPGI (102 aa). Over residues 564–579 the composition is skewed to low complexity; that stretch reads GSQHSEGSRSSGSNRS. 2 stretches are compositionally biased toward basic and acidic residues: residues 580 to 593 and 602 to 618; these read STEK…KGGD and ESDH…RAAS. Basic residues predominate over residues 629–645; it reads HRSHHSIAHSIRSHHTH.

Belongs to the DSH family. Expressed throughout the epidermis.

The protein resides in the cytoplasm. In terms of biological role, involved in the signal transduction pathway mediated by multiple Wnt genes. Required during ciliogenesis for the docking of basal bodies to the apical plasma membrane. This is Segment polarity protein dishevelled homolog DVL-3 from Xenopus laevis (African clawed frog).